The following is a 641-amino-acid chain: SUMO-activating enzyme subunit 2-A (641 aa).

Residues 24–29, Asp-48, 56–59, Lys-72, 95–96, and 117–122 contribute to the ATP site; these read GAGGIG, NLNR, SI, and DNNAAR. Residues Cys-158 and Cys-161 each coordinate Zn(2+). Cys-173 functions as the Glycyl thioester intermediate in the catalytic mechanism. Positions 439 and 442 each coordinate Zn(2+). The segment at 546 to 641 is disordered; sequence GDVPEKGPQK…EEDDDIIALD (96 aa). The segment covering 548 to 561 has biased composition (basic and acidic residues); sequence VPEKGPQKPPEESV. The segment covering 562–579 has biased composition (polar residues); the sequence is KNITNGSDDGAQPSTSKA. Acidic residues-rich tracts occupy residues 582 to 594 and 630 to 641; these read QDDVLIVDSDEES and PVEEDDDIIALD.

Belongs to the ubiquitin-activating E1 family. In terms of assembly, heterodimer of sae1 and uba2/sae2. The heterodimer corresponds to the two domains that are encoded on a single polypeptide chain in ubiquitin-activating enzyme E1. Interacts with ube2i.

The protein resides in the nucleus. The protein operates within protein modification; protein sumoylation. The heterodimer acts as an E1 ligase for sumo1, sumo2, and sumo3. It mediates ATP-dependent activation of sumo proteins followed by formation of a thioester bond between a sumo protein and a conserved active site cysteine residue on uba2/sae2. This chain is SUMO-activating enzyme subunit 2-A (uba2-a), found in Xenopus laevis (African clawed frog).